Here is a 197-residue protein sequence, read N- to C-terminus: Carbohydrate-binding X8 domain-containing protein (197 aa).

The first 19 residues, 1–19 (MAVLLPLFLLSFMFTYSNA), serve as a signal peptide directing secretion. Positions 101–113 (SCLSSSSSNGTPT) are enriched in low complexity. The tract at residues 101–176 (SCLSSSSSNG…TSGDPNGGEE (76 aa)) is disordered. A compositionally biased stretch (polar residues) spans 116 to 125 (YPSTGNSTTA). Positions 126–145 (SPGTTNPSTGNSTNSTLPTN) are enriched in low complexity. The span at 146 to 155 (DKPTSSTITF) shows a compositional bias: polar residues. Positions 156–170 (PDSTTMGPSSSTSGD) are enriched in low complexity. N172 is lipidated: GPI-anchor amidated asparagine. Residues 173-197 (GGEELSVRTTTIILLTTIAAVALRV) constitute a propeptide, removed in mature form.

In terms of tissue distribution, expressed in the sieve elements.

Its subcellular location is the cell membrane. In Arabidopsis thaliana (Mouse-ear cress), this protein is Carbohydrate-binding X8 domain-containing protein.